The following is a 334-amino-acid chain: tRNA-dihydrouridine(20/20a) synthase (334 aa).

FMN contacts are provided by residues Pro17 to Met19 and Gln70. Catalysis depends on Cys100, which acts as the Proton donor. Residues Lys139, His171, Asn211 to Gly213, and Gly233 to Arg234 each bind FMN.

The protein belongs to the Dus family. DusA subfamily. The cofactor is FMN.

The enzyme catalyses 5,6-dihydrouridine(20) in tRNA + NADP(+) = uridine(20) in tRNA + NADPH + H(+). It carries out the reaction 5,6-dihydrouridine(20) in tRNA + NAD(+) = uridine(20) in tRNA + NADH + H(+). It catalyses the reaction 5,6-dihydrouridine(20a) in tRNA + NADP(+) = uridine(20a) in tRNA + NADPH + H(+). The catalysed reaction is 5,6-dihydrouridine(20a) in tRNA + NAD(+) = uridine(20a) in tRNA + NADH + H(+). Functionally, catalyzes the synthesis of 5,6-dihydrouridine (D), a modified base found in the D-loop of most tRNAs, via the reduction of the C5-C6 double bond in target uridines. Specifically modifies U20 and U20a in tRNAs. This Synechocystis sp. (strain ATCC 27184 / PCC 6803 / Kazusa) protein is tRNA-dihydrouridine(20/20a) synthase (dus2).